Consider the following 568-residue polypeptide: Probable inactive poly [ADP-ribose] polymerase SRO1 (568 aa).

The span at 1–18 (MEAKIVKVSDSSYKDGLG) shows a compositional bias: basic and acidic residues. The tract at residues 1 to 32 (MEAKIVKVSDSSYKDGLGKKRKHPGNYTPYDS) is disordered. The 76-residue stretch at 77–152 (RYFSYYKKTG…ETGVKTQLAW (76 aa)) folds into the WWE domain. Disordered stretches follow at residues 220-241 (DFQA…DSCS) and 453-500 (ILPT…RRPR). The PARP catalytic domain maps to 245–463 (DDAVEKWDKT…LPTTQSRHES (219 aa)). Residues 497–568 (RRPRSPIMPF…TITGLQRSLG (72 aa)) enclose the RST domain.

As to quaternary structure, interacts with DREB2A, DREB2B, DREB2C and NAC082. As to expression, expressed in young developing tissues, such as young leaves and flowers and root tips. In mature plants, expressed in vasculature of leaves and roots.

The protein resides in the nucleus matrix. Probable inactive ADP-ribosyltransferase that functions with RCD1 to regulate oxidative stress, hormonal and developmental responses. May regulate some stress-responsive genes. Seems to play a smaller developmental role than R. This is Probable inactive poly [ADP-ribose] polymerase SRO1 (SRO1) from Arabidopsis thaliana (Mouse-ear cress).